The primary structure comprises 170 residues: MLASPALAGARAFAATVSGSLGIPIPAISAPSPSQARRRASLVVVAKVKVSTPQADRIARHVRLRKKVSGTTERPRLSVFRSNKHLYAQVIDDTKSCTLVSASTMHKSLSKDLEYSAGPTVEVAQKIGEVIAKSCLEKGITKVVFDRGGFLYHGRIKALADAARENGLDF.

Residues 1 to 63 (MLASPALAGA…QADRIARHVR (63 aa)) constitute a chloroplast transit peptide.

It belongs to the universal ribosomal protein uL18 family. In terms of assembly, part of the 50S ribosomal subunit; contacts the 5S rRNA.

It localises to the plastid. Its subcellular location is the chloroplast. Its function is as follows. Binds 5S rRNA, forms part of the central protuberance of the 50S subunit. This is Large ribosomal subunit protein uL18c (RPL18) from Oryza sativa subsp. japonica (Rice).